A 183-amino-acid chain; its full sequence is NADH-quinone oxidoreductase subunit I (183 aa).

4Fe-4S ferredoxin-type domains follow at residues 71-100 (KRDE…MKAA) and 117-146 (EIYE…LTTS). Residues Cys-80, Cys-83, Cys-86, Cys-90, Cys-126, Cys-129, Cys-132, and Cys-136 each contribute to the [4Fe-4S] cluster site.

This sequence belongs to the complex I 23 kDa subunit family. In terms of assembly, NDH-1 is composed of 14 different subunits. Subunits NuoA, H, J, K, L, M, N constitute the membrane sector of the complex. [4Fe-4S] cluster is required as a cofactor.

The protein localises to the cell inner membrane. The catalysed reaction is a quinone + NADH + 5 H(+)(in) = a quinol + NAD(+) + 4 H(+)(out). In terms of biological role, NDH-1 shuttles electrons from NADH, via FMN and iron-sulfur (Fe-S) centers, to quinones in the respiratory chain. The immediate electron acceptor for the enzyme in this species is believed to be ubiquinone. Couples the redox reaction to proton translocation (for every two electrons transferred, four hydrogen ions are translocated across the cytoplasmic membrane), and thus conserves the redox energy in a proton gradient. This Flavobacterium psychrophilum (strain ATCC 49511 / DSM 21280 / CIP 103535 / JIP02/86) protein is NADH-quinone oxidoreductase subunit I.